The chain runs to 382 residues: D-galactonate dehydratase (382 aa).

Asp-183 contacts Mg(2+). The Proton donor role is filled by His-185. Mg(2+) is bound by residues Glu-209 and Glu-235. The active-site Proton acceptor is the His-285.

This sequence belongs to the mandelate racemase/muconate lactonizing enzyme family. GalD subfamily. The cofactor is Mg(2+).

The catalysed reaction is D-galactonate = 2-dehydro-3-deoxy-D-galactonate + H2O. It functions in the pathway carbohydrate acid metabolism; D-galactonate degradation; D-glyceraldehyde 3-phosphate and pyruvate from D-galactonate: step 1/3. Catalyzes the dehydration of D-galactonate to 2-keto-3-deoxy-D-galactonate. This is D-galactonate dehydratase from Salmonella gallinarum (strain 287/91 / NCTC 13346).